A 495-amino-acid chain; its full sequence is Probable leucine aminopeptidase 2 (495 aa).

An N-terminal signal peptide occupies residues 1 to 21; sequence MKSQLLSLAVAVTTISQGVVG. In terms of domain architecture, PA spans 130–216; sequence MAELVVAKNN…SQEDGKNLAT (87 aa). N-linked (GlcNAc...) asparagine glycans are attached at residues asparagine 142 and asparagine 235. Histidine 259 and aspartate 271 together coordinate Zn(2+). Asparagine 272 carries an N-linked (GlcNAc...) asparagine glycan. Glutamate 303 acts as the Proton acceptor in catalysis. Positions 304 and 332 each coordinate Zn(2+). N-linked (GlcNAc...) asparagine glycosylation occurs at asparagine 352. Histidine 430 contacts Zn(2+).

It belongs to the peptidase M28 family. M28A subfamily. As to quaternary structure, monomer. Requires Zn(2+) as cofactor.

Its subcellular location is the secreted. Its function is as follows. Extracellular aminopeptidase that releases a wide variety of amino acids from natural peptides and contributes to pathogenicity. The chain is Probable leucine aminopeptidase 2 (LAP2) from Trichophyton verrucosum (strain HKI 0517).